Consider the following 622-residue polypeptide: UvrABC system protein C (622 aa).

A GIY-YIG domain is found at 12-91 (SSPGVYIMKD…IKKYRPKYNF (80 aa)). Residues 201-236 (REILKIFRERMSAAAAAEKYEKAARFRDLIRSIEVT) form the UVR domain.

It belongs to the UvrC family. Interacts with UvrB in an incision complex.

It is found in the cytoplasm. The UvrABC repair system catalyzes the recognition and processing of DNA lesions. UvrC both incises the 5' and 3' sides of the lesion. The N-terminal half is responsible for the 3' incision and the C-terminal half is responsible for the 5' incision. In Geotalea daltonii (strain DSM 22248 / JCM 15807 / FRC-32) (Geobacter daltonii), this protein is UvrABC system protein C.